Here is a 468-residue protein sequence, read N- to C-terminus: Protein maelstrom 2 (468 aa).

A DNA-binding region (HMG box) is located at residues 2–69 (PPKKHSGFMM…LTRVKKERLN (68 aa)). The interval 374 to 393 (KEDSPTVLSPASSRRSLASS) is disordered. Residues 381–393 (LSPASSRRSLASS) show a composition bias toward low complexity.

It belongs to the maelstrom family.

It is found in the cytoplasm. The protein resides in the nucleus. Its function is as follows. Involved both in the piRNA and miRNA metabolic processes. As a component of the meiotic nuage, plays a central role during oogenesis by repressing transposable elements and preventing their mobilization, which is essential for the germline integrity. Repression of transposable elements is mediated via the piRNA metabolic process, which mediates the repression of transposable elements during meiosis by forming complexes composed of piRNAs and Piwi proteins and governs the repression of transposons. As a nuclear component, it is required for proper differentiation in the germline stem cell (GSC) lineage by repressing microRNA-7 (miR-7), thereby acting as an indirect regulator of bag-of-marbles (Bam). Acts by binding to the promoter of miR-7 gene and repressing its expression; miR-7 repression alleviates the Bam repression by miR-7, thereby allowing differentiation in the germline stem cell (GSC) lineage. This chain is Protein maelstrom 2 (mael2), found in Drosophila ananassae (Fruit fly).